A 320-amino-acid chain; its full sequence is MVGKSVITLDDLSIRQIQEMLHKAQYIDSHRKEVAHTCEGRVLATLFYEPSTRTRLSFETAMLRLGGKVIGFAGAQLASVTKGETIADTLKTVSNYVDVVAIRHPKEGAALVASRAASVPVINAGDGGHMHPTQTLADLATLQSRFGRVTNLTVGLCGDLTFGRTVHSLIETLCRFGNVNFVLISPDELKTPQYVLDRINATESCSYTEVKDLVSVIGDLDVLYMTRVQKERFFNEDDYLRLRDTYILDEAKMAYAKKDMAVLHPLPRVNEIAVEVDDDPRAAYFEQVKNGMLMRMALESSVVGDELPGYEPLAAKEVEA.

Carbamoyl phosphate contacts are provided by R53 and T54. K82 lines the L-aspartate pocket. Carbamoyl phosphate-binding residues include R103, H131, and Q134. 2 residues coordinate L-aspartate: R164 and R227. The carbamoyl phosphate site is built by L266 and P267.

The protein belongs to the aspartate/ornithine carbamoyltransferase superfamily. ATCase family. As to quaternary structure, heterododecamer (2C3:3R2) of six catalytic PyrB chains organized as two trimers (C3), and six regulatory PyrI chains organized as three dimers (R2).

The catalysed reaction is carbamoyl phosphate + L-aspartate = N-carbamoyl-L-aspartate + phosphate + H(+). It participates in pyrimidine metabolism; UMP biosynthesis via de novo pathway; (S)-dihydroorotate from bicarbonate: step 2/3. Catalyzes the condensation of carbamoyl phosphate and aspartate to form carbamoyl aspartate and inorganic phosphate, the committed step in the de novo pyrimidine nucleotide biosynthesis pathway. This Bifidobacterium adolescentis (strain ATCC 15703 / DSM 20083 / NCTC 11814 / E194a) protein is Aspartate carbamoyltransferase catalytic subunit.